A 338-amino-acid chain; its full sequence is Phenylalanine--tRNA ligase alpha subunit (338 aa).

The segment at 71 to 101 (QFEEKRSSLSQQTSSSDTYQSLPDLTLPGRQ) is disordered. Residues 78 to 92 (SLSQQTSSSDTYQSL) show a composition bias toward low complexity. Position 253 (glutamate 253) interacts with Mg(2+).

Belongs to the class-II aminoacyl-tRNA synthetase family. Phe-tRNA synthetase alpha subunit type 1 subfamily. In terms of assembly, tetramer of two alpha and two beta subunits. The cofactor is Mg(2+).

The protein localises to the cytoplasm. The enzyme catalyses tRNA(Phe) + L-phenylalanine + ATP = L-phenylalanyl-tRNA(Phe) + AMP + diphosphate + H(+). This Desulfotalea psychrophila (strain LSv54 / DSM 12343) protein is Phenylalanine--tRNA ligase alpha subunit.